Reading from the N-terminus, the 111-residue chain is Cyanovirin-N homolog (111 aa).

It belongs to the cyanovirin-N family.

Mannose-binding lectin. In Neurospora crassa (strain ATCC 24698 / 74-OR23-1A / CBS 708.71 / DSM 1257 / FGSC 987), this protein is Cyanovirin-N homolog.